Here is a 204-residue protein sequence, read N- to C-terminus: Phosphoheptose isomerase (204 aa).

Positions 38–199 (MAVALARGGK…LFEAVMELGP (162 aa)) constitute an SIS domain. Substrate is bound at residue 53–55 (NGG). Zn(2+) contacts are provided by histidine 62 and glutamate 66. Substrate is bound by residues glutamate 66, 95-96 (ND), 121-123 (STS), serine 126, and glutamine 172. Zn(2+)-binding residues include glutamine 172 and histidine 180.

The protein belongs to the SIS family. GmhA subfamily. In terms of assembly, homotetramer. Zn(2+) is required as a cofactor.

It localises to the cytoplasm. It catalyses the reaction 2 D-sedoheptulose 7-phosphate = D-glycero-alpha-D-manno-heptose 7-phosphate + D-glycero-beta-D-manno-heptose 7-phosphate. It participates in carbohydrate biosynthesis; D-glycero-D-manno-heptose 7-phosphate biosynthesis; D-glycero-alpha-D-manno-heptose 7-phosphate and D-glycero-beta-D-manno-heptose 7-phosphate from sedoheptulose 7-phosphate: step 1/1. Catalyzes the isomerization of sedoheptulose 7-phosphate in D-glycero-D-manno-heptose 7-phosphate. The chain is Phosphoheptose isomerase from Solidesulfovibrio magneticus (strain ATCC 700980 / DSM 13731 / RS-1) (Desulfovibrio magneticus).